The primary structure comprises 494 residues: Alpha-amylase B (494 aa).

The first 18 residues, 1 to 18, serve as a signal peptide directing secretion; the sequence is MFLAKSIVCLALLAVANA. Gln19 carries the pyrrolidone carboxylic acid modification. Cysteines 46 and 102 form a disulfide. The Ca(2+) site is built by Asn116, Arg165, and Asp174. A disulfide bridge connects residues Cys153 and Cys167. Arg202 is a chloride binding site. The active-site Nucleophile is Asp204. Residue His208 coordinates Ca(2+). The Proton donor role is filled by Glu241. 2 residues coordinate chloride: Asn304 and Arg343. 2 cysteine pairs are disulfide-bonded: Cys376–Cys382 and Cys448–Cys460.

This sequence belongs to the glycosyl hydrolase 13 family. In terms of assembly, monomer. Ca(2+) is required as a cofactor. Chloride serves as cofactor.

It carries out the reaction Endohydrolysis of (1-&gt;4)-alpha-D-glucosidic linkages in polysaccharides containing three or more (1-&gt;4)-alpha-linked D-glucose units.. This is Alpha-amylase B (Amy-d) from Drosophila melanogaster (Fruit fly).